We begin with the raw amino-acid sequence, 50 residues long: Mast cell degranulating peptide (50 aa).

Positions 1–27 (MISMLRCTFFFVSVILITSYFVTPTMS) are cleaved as a signal peptide. Lys29 is subject to N6-formyllysine. A disulfide bond links Cys30 and Cys42. An N6-formyllysine mark is found at Lys44 and Lys48. At Asn49 the chain carries Asparagine amide.

As to expression, expressed by the venom gland.

It is found in the secreted. In terms of biological role, potent anti-inflammatory agent. At low concentrations, mediates the degranulation of mast cells thus evoking an inflammatory response. Also acts as a neurotoxin capable of blocking a class of voltage-gated potassium channels. In Apis cerana cerana (Oriental honeybee), this protein is Mast cell degranulating peptide.